The primary structure comprises 116 residues: Protein Rev (116 aa).

Residues Ser5 and Ser8 each carry the phosphoserine; by host CK2 modification. Residues 18-26 form a homomultimerization region; it reads LIKFLYQSN. Positions 23-49 are disordered; that stretch reads YQSNPPPNPEGTRQARRNRRRRWRERQ. Positions 34–50 match the Nuclear localization signal and RNA-binding (RRE) motif; sequence TRQARRNRRRRWRERQR. The segment covering 36–47 has biased composition (basic residues); sequence QARRNRRRRWRE. Residues 73–84 carry the Nuclear export signal and binding to XPO1 motif; sequence LQLPPLERLTLD. Residues Ser92 and Ser99 each carry the phosphoserine; by host modification. The interval 92 to 116 is disordered; that stretch reads SGTQGVGSPQILVESPTVLESGTKE.

This sequence belongs to the HIV-1 REV protein family. As to quaternary structure, homomultimer; when bound to the RRE. Multimeric assembly is essential for activity and may involve XPO1. Binds to human KPNB1, XPO1, TNPO1, RANBP5 and IPO7. Interacts with the viral Integrase. Interacts with human KHDRBS1. Interacts with human NAP1; this interaction decreases Rev multimerization and stimulates its activity. Interacts with human DEAD-box helicases DDX3 and DDX24; these interactions may serve for viral RNA export to the cytoplasm and packaging, respectively. Interacts with human PSIP1; this interaction may inhibit HIV-1 DNA integration by promoting dissociation of the Integrase-LEDGF/p75 complex. Post-translationally, asymmetrically arginine dimethylated at one site by host PRMT6. Methylation impairs the RNA-binding activity and export of viral RNA from the nucleus to the cytoplasm. In terms of processing, phosphorylated by protein kinase CK2. Presence of, and maybe binding to the N-terminus of the regulatory beta subunit of CK2 is necessary for CK2-mediated Rev's phosphorylation.

It localises to the host nucleus. The protein localises to the host nucleolus. It is found in the host cytoplasm. Escorts unspliced or incompletely spliced viral pre-mRNAs (late transcripts) out of the nucleus of infected cells. These pre-mRNAs carry a recognition sequence called Rev responsive element (RRE) located in the env gene, that is not present in fully spliced viral mRNAs (early transcripts). This function is essential since most viral proteins are translated from unspliced or partially spliced pre-mRNAs which cannot exit the nucleus by the pathway used by fully processed cellular mRNAs. Rev itself is translated from a fully spliced mRNA that readily exits the nucleus. Rev's nuclear localization signal (NLS) binds directly to KPNB1/Importin beta-1 without previous binding to KPNA1/Importin alpha-1. KPNB1 binds to the GDP bound form of RAN (Ran-GDP) and targets Rev to the nucleus. In the nucleus, the conversion from Ran-GDP to Ran-GTP dissociates Rev from KPNB1 and allows Rev's binding to the RRE in viral pre-mRNAs. Rev multimerization on the RRE via cooperative assembly exposes its nuclear export signal (NES) to the surface. Rev can then form a complex with XPO1/CRM1 and Ran-GTP, leading to nuclear export of the complex. Conversion from Ran-GTP to Ran-GDP mediates dissociation of the Rev/RRE/XPO1/RAN complex, so that Rev can return to the nucleus for a subsequent round of export. Beside KPNB1, also seems to interact with TNPO1/Transportin-1, RANBP5/IPO5 and IPO7/RANBP7 for nuclear import. The nucleoporin-like HRB/RIP is an essential cofactor that probably indirectly interacts with Rev to release HIV RNAs from the perinuclear region to the cytoplasm. The protein is Protein Rev of Human immunodeficiency virus type 1 group M subtype B (isolate BRU/LAI) (HIV-1).